The sequence spans 718 residues: GMP synthase [glutamine-hydrolyzing] (718 aa).

The Glutamine amidotransferase type-1 domain maps to 43–247 (VIVILDAGSQ…LIDICGCSAN (205 aa)). Residues Cys-128, His-221, and Glu-223 each act as for GATase activity in the active site. In terms of domain architecture, GMPS ATP-PPase spans 248–457 (YTLDDREQQA…LGLSDSLVWR (210 aa)). 275 to 281 (SGGVDST) serves as a coordination point for ATP.

As to quaternary structure, homodimer.

The catalysed reaction is XMP + L-glutamine + ATP + H2O = GMP + L-glutamate + AMP + diphosphate + 2 H(+). The protein operates within purine metabolism; GMP biosynthesis; GMP from XMP (L-Gln route): step 1/1. This is GMP synthase [glutamine-hydrolyzing] (guaA) from Dictyostelium discoideum (Social amoeba).